We begin with the raw amino-acid sequence, 2832 residues long: Cyclic beta-(1,2)-glucan synthase NdvB (2832 aa).

7 helical membrane passes run 411–431 (FAIA…VYAF), 444–464 (IMLL…FNTV), 810–830 (LIPV…EPTP), 831–851 (ALIW…LSLI), 880–900 (QVAL…DAIV), 938–958 (WTAP…DTGL), and 959–979 (PFIG…AWFV). One can recognise a Glycoamylase-like domain in the interval 1299-1506 (LASEARLTSL…NGQLREWFHA (208 aa)).

The protein belongs to the NdvB family.

The protein localises to the cell inner membrane. It carries out the reaction [(1-&gt;2)-beta-D-glucosyl](n) + UDP-alpha-D-glucose = [(1-&gt;2)-beta-D-glucosyl](n+1) + UDP + H(+). Functionally, involved in the biosynthesis of cyclic beta-(1,2)-glucan. It seems that NdvB is involved in three enzymatic activities. First, it may catalyze the transfer of the first glucose from UDP-Glc to an unknown amino acid. In the second enzymatic activity (UDP-Glc:beta-(1,2) oligosaccharide glucosyltransferase), it may be responsible for chain elongation. Finally, in the third activity, it may catalyze glucan cyclization and release from the protein. NdvB is also involved in nodule invasion and in bacteroid development. This is Cyclic beta-(1,2)-glucan synthase NdvB from Rhizobium meliloti (strain 1021) (Ensifer meliloti).